The primary structure comprises 289 residues: F-actin-capping protein subunit beta (289 aa).

A disordered region spans residues 73-110 (RSPWSNQFDPPLEGGNQGGSGGDGEGDGGEGGAAGSIM). The span at 87 to 106 (GNQGGSGGDGEGDGGEGGAA) shows a compositional bias: gly residues.

Belongs to the F-actin-capping protein beta subunit family. Component of the F-actin capping complex, composed of a heterodimer of an alpha and a beta subunit.

The protein localises to the cytoplasm. The protein resides in the cytoskeleton. Its subcellular location is the actin patch. F-actin-capping proteins bind in a Ca(2+)-independent manner to the fast growing ends of actin filaments (barbed end) thereby blocking the exchange of subunits at these ends. Unlike other capping proteins (such as gelsolin and severin), these proteins do not sever actin filaments. This chain is F-actin-capping protein subunit beta (fac-2), found in Neurospora crassa (strain ATCC 24698 / 74-OR23-1A / CBS 708.71 / DSM 1257 / FGSC 987).